We begin with the raw amino-acid sequence, 66 residues long: Ejaculatory bulb-specific protein 2 (66 aa).

The N-terminal stretch at Met-1–Cys-20 is a signal peptide.

Specifically expressed in the ejaculatory bulb and seminal fluid.

It is found in the secreted. In terms of biological role, protein component of the posterior mating plug. This chain is Ejaculatory bulb-specific protein 2, found in Drosophila melanogaster (Fruit fly).